A 206-amino-acid polypeptide reads, in one-letter code: Ras-related protein RABG3c (206 aa).

15 to 22 (GDSGVGKT) contacts GTP. Residues 37-45 (YKATIGADF) carry the Effector region motif. Residues 63–67 (DTAGQ), 125–128 (NKTD), and 158–159 (SA) each bind GTP. Residues C204 and C206 are each lipidated (S-geranylgeranyl cysteine). Cysteine methyl ester is present on C206.

This sequence belongs to the small GTPase superfamily. Rab family.

The protein resides in the cell membrane. In terms of biological role, intracellular vesicle trafficking and protein transport. The sequence is that of Ras-related protein RABG3c (RABG3C) from Arabidopsis thaliana (Mouse-ear cress).